A 335-amino-acid polypeptide reads, in one-letter code: UPF0353 protein MLBr01808 (335 aa).

The next 2 helical transmembrane spans lie at 18–38 (WFFL…MMQV) and 67–87 (VPAI…AGPT). The VWFA domain maps to 98-294 (VVMLVIDVSQ…AELKAVYASL (197 aa)). The helical transmembrane segment at 309 to 329 (AGWLRLGVLVLALAALTALLI) threads the bilayer.

The protein belongs to the UPF0353 family.

The protein localises to the cell membrane. The sequence is that of UPF0353 protein MLBr01808 from Mycobacterium leprae (strain Br4923).